A 97-amino-acid polypeptide reads, in one-letter code: Pyrin domain-containing protein 2 (97 aa).

In terms of domain architecture, Pyrin spans 1-94 (MASSAELDFN…SGRADEHCVM (94 aa)).

Interacts with PYCARD/ASC (via pyrin domain). Interacts with NLRP2 (via pyrin domain). Predominantly expressed in peripheral blood. Weakly expressed in testis.

It localises to the cytoplasm. The protein localises to the nucleus. May play a role in innate immunity by disrupting the interaction between PYCARD and NLRP3, thereby regulating the NLRP3 inflammasome. May also inhibit NF-kappa-B signaling distally by affecting the nuclear accumulation of RELA. This chain is Pyrin domain-containing protein 2, found in Homo sapiens (Human).